The primary structure comprises 1712 residues: U3 small nucleolar RNA-associated protein 10 (1712 aa).

7 HEAT repeats span residues Glu164–Glu202, Thr490–Ser528, Thr564–Gly605, Thr987–His1025, Val1236–Lys1275, Glu1605–Ala1646, and Leu1667–Glu1705.

The protein belongs to the HEATR1/UTP10 family. As to quaternary structure, component of the ribosomal small subunit (SSU) processome.

It localises to the nucleus. It is found in the nucleolus. Involved in nucleolar processing of pre-18S ribosomal RNA. Involved in ribosome biosynthesis. This chain is U3 small nucleolar RNA-associated protein 10, found in Phaeosphaeria nodorum (strain SN15 / ATCC MYA-4574 / FGSC 10173) (Glume blotch fungus).